Consider the following 429-residue polypeptide: Probable beta-1,3-galactosyl-O-glycosyl-glycoprotein beta-1,6-N-acetylglucosaminyltransferase 7 (429 aa).

The Cytoplasmic portion of the chain corresponds to 1–8; sequence MSQLRATK. The helical; Signal-anchor for type II membrane protein transmembrane segment at 9 to 25 threads the bilayer; that stretch reads PGILVCAAIGIFVFLYL. Residues 26–429 are Extracellular-facing; sequence RNPTSEDPEE…ESHLNRRLNP (404 aa). Cystine bridges form between Cys-53/Cys-205, Cys-139/Cys-354, Cys-160/Cys-187, and Cys-363/Cys-394. A glycan (N-linked (GlcNAc...) asparagine) is linked at Asn-87. An N-linked (GlcNAc...) asparagine glycan is attached at Asn-272.

Belongs to the glycosyltransferase 14 family.

It is found in the golgi apparatus membrane. The protein operates within protein modification; protein glycosylation. Its function is as follows. Probable glycosyltransferase. This Sus scrofa (Pig) protein is Probable beta-1,3-galactosyl-O-glycosyl-glycoprotein beta-1,6-N-acetylglucosaminyltransferase 7.